Consider the following 110-residue polypeptide: ATP synthase epsilon chain (110 aa).

This sequence belongs to the ATPase epsilon chain family. In terms of assembly, F-type ATPases have 2 components, CF(1) - the catalytic core - and CF(0) - the membrane proton channel. CF(1) has five subunits: alpha(3), beta(3), gamma(1), delta(1), epsilon(1). CF(0) has three main subunits: a, b and c.

It is found in the cell inner membrane. In terms of biological role, produces ATP from ADP in the presence of a proton gradient across the membrane. The protein is ATP synthase epsilon chain of Rickettsia typhi (strain ATCC VR-144 / Wilmington).